We begin with the raw amino-acid sequence, 290 residues long: Small ribosomal subunit protein uS11 (290 aa).

Residues 243–271 (DWEAAPAGFPATGEWSDAAPGAAAPNWDA) form a disordered region. The segment covering 257 to 271 (WSDAAPGAAAPNWDA) has biased composition (low complexity).

Belongs to the universal ribosomal protein uS2 family. In terms of assembly, component of the small ribosomal subunit (SSU). Mature N.crassa ribosomes consist of a small (40S) and a large (60S) subunit. The 40S small subunit contains 1 molecule of ribosomal RNA (18S rRNA) and at least 32 different proteins. The large 60S subunit contains 3 rRNA molecules (26S, 5.8S and 5S rRNA) and at least 42 different proteins. Interacts with rps21.

It is found in the cytoplasm. Its function is as follows. Component of the ribosome, a large ribonucleoprotein complex responsible for the synthesis of proteins in the cell. The small ribosomal subunit (SSU) binds messenger RNAs (mRNAs) and translates the encoded message by selecting cognate aminoacyl-transfer RNA (tRNA) molecules. The large subunit (LSU) contains the ribosomal catalytic site termed the peptidyl transferase center (PTC), which catalyzes the formation of peptide bonds, thereby polymerizing the amino acids delivered by tRNAs into a polypeptide chain. The nascent polypeptides leave the ribosome through a tunnel in the LSU and interact with protein factors that function in enzymatic processing, targeting, and the membrane insertion of nascent chains at the exit of the ribosomal tunnel. uS2 is required for the assembly and/or stability of the 40S ribosomal subunit. Required for the processing of the 20S rRNA-precursor to mature 18S rRNA in a late step of the maturation of 40S ribosomal subunits. The polypeptide is Small ribosomal subunit protein uS11 (Neurospora crassa (strain ATCC 24698 / 74-OR23-1A / CBS 708.71 / DSM 1257 / FGSC 987)).